An 86-amino-acid polypeptide reads, in one-letter code: Serine protease inhibitor Kazal-type 4 (86 aa).

An N-terminal signal peptide occupies residues 1 to 26 (MAVRLWVVALALAALFIVDREVPVSA). The region spanning 31 to 86 (FSRMPICEHMTESPDCSRIYDPVCGTDGVTYESECKLCLARIENKQDIQIVKDGEC) is the Kazal-like domain. Cystine bridges form between cysteine 37-cysteine 68, cysteine 46-cysteine 65, and cysteine 54-cysteine 86.

Synthesized in duodenal goblet cells and in monocytes in bone marrow and blood.

The protein resides in the secreted. In terms of biological role, inhibits the glucose-induced insulin secretion from perfused pancreas; also plays a role in the immune system. Does not inhibit trypsin. This chain is Serine protease inhibitor Kazal-type 4 (SPINK4), found in Sus scrofa (Pig).